The sequence spans 153 residues: Holo-[acyl-carrier-protein] synthase (153 aa).

Mg(2+) contacts are provided by Asp-24 and Glu-78.

It belongs to the P-Pant transferase superfamily. AcpS family. Mg(2+) is required as a cofactor.

It is found in the cytoplasm. It carries out the reaction apo-[ACP] + CoA = holo-[ACP] + adenosine 3',5'-bisphosphate + H(+). Transfers the 4'-phosphopantetheine moiety from coenzyme A to a Ser of acyl-carrier-protein. This is Holo-[acyl-carrier-protein] synthase from Bordetella parapertussis (strain 12822 / ATCC BAA-587 / NCTC 13253).